We begin with the raw amino-acid sequence, 837 residues long: Phenylalanine--tRNA ligase beta subunit (837 aa).

The tRNA-binding domain occupies 39-149 (SASLEGIVTG…EMNIAIPKIG (111 aa)). In terms of domain architecture, B5 spans 415-520 (IEEQLLLLRR…RLIGYDRFDS (106 aa)). Mg(2+)-binding residues include Asp498, Asp504, Glu507, and Glu508. Positions 743 to 836 (PTVPSMERDI…LKVEFSAELR (94 aa)) constitute an FDX-ACB domain.

Belongs to the phenylalanyl-tRNA synthetase beta subunit family. Type 1 subfamily. In terms of assembly, tetramer of two alpha and two beta subunits. Requires Mg(2+) as cofactor.

The protein localises to the cytoplasm. It carries out the reaction tRNA(Phe) + L-phenylalanine + ATP = L-phenylalanyl-tRNA(Phe) + AMP + diphosphate + H(+). The sequence is that of Phenylalanine--tRNA ligase beta subunit from Prochlorococcus marinus (strain SARG / CCMP1375 / SS120).